Consider the following 119-residue polypeptide: Holo-[acyl-carrier-protein] synthase (119 aa).

Positions 8 and 58 each coordinate Mg(2+).

The protein belongs to the P-Pant transferase superfamily. AcpS family. Mg(2+) is required as a cofactor.

The protein resides in the cytoplasm. The catalysed reaction is apo-[ACP] + CoA = holo-[ACP] + adenosine 3',5'-bisphosphate + H(+). In terms of biological role, transfers the 4'-phosphopantetheine moiety from coenzyme A to a Ser of acyl-carrier-protein. The chain is Holo-[acyl-carrier-protein] synthase from Bacillus cereus (strain G9842).